Here is a 273-residue protein sequence, read N- to C-terminus: Nickel import ATP-binding protein NikE (273 aa).

Residues 13–252 form the ABC transporter domain; it reads YRTGGLLRKR…AHPVGRQLQA (240 aa). 45 to 52 serves as a coordination point for ATP; that stretch reads GSSGSGKS.

It belongs to the ABC transporter superfamily. Nickel importer (TC 3.A.1.5.3) family. The complex is composed of two ATP-binding proteins (NikD and NikE), two transmembrane proteins (NikB and NikC) and a solute-binding protein (NikA).

The protein localises to the cell inner membrane. It catalyses the reaction Ni(2+)(out) + ATP + H2O = Ni(2+)(in) + ADP + phosphate + H(+). Its function is as follows. Part of the ABC transporter complex NikABCDE involved in nickel import. Responsible for energy coupling to the transport system. In Pseudomonas putida (strain ATCC 47054 / DSM 6125 / CFBP 8728 / NCIMB 11950 / KT2440), this protein is Nickel import ATP-binding protein NikE.